Reading from the N-terminus, the 567-residue chain is Probable serine/threonine-protein kinase WNK6 (567 aa).

Residues 28–285 (IRYKEVIGKG…AKELLLDPFL (258 aa)) form the Protein kinase domain. Residues 108–111 (TELF) and Lys-158 each bind ATP. Residue Asp-175 is the Proton acceptor of the active site. Positions 499–509 (VDATKGEDKSS) are enriched in basic and acidic residues. The segment at 499–528 (VDATKGEDKSSIQEVEEATEPVSLEEEERL) is disordered. The span at 512–525 (EVEEATEPVSLEEE) shows a compositional bias: acidic residues. Residues 519 to 553 (PVSLEEEERLRQELEEIEAKYQEDMKEIATKREEA) are a coiled coil.

Belongs to the protein kinase superfamily. Ser/Thr protein kinase family. WNK subfamily.

It catalyses the reaction L-seryl-[protein] + ATP = O-phospho-L-seryl-[protein] + ADP + H(+). The enzyme catalyses L-threonyl-[protein] + ATP = O-phospho-L-threonyl-[protein] + ADP + H(+). May regulate flowering time by modulating the photoperiod pathway. The protein is Probable serine/threonine-protein kinase WNK6 (WNK6) of Arabidopsis thaliana (Mouse-ear cress).